A 270-amino-acid polypeptide reads, in one-letter code: 3-methyl-2-oxobutanoate hydroxymethyltransferase (270 aa).

The Mg(2+) site is built by Asp-41 and Asp-80. Residues 41–42, Asp-80, and Lys-109 contribute to the 3-methyl-2-oxobutanoate site; that span reads DS. Position 111 (Glu-111) interacts with Mg(2+). The active-site Proton acceptor is Glu-178.

Belongs to the PanB family. As to quaternary structure, homodecamer; pentamer of dimers. Mg(2+) is required as a cofactor.

It is found in the cytoplasm. The catalysed reaction is 3-methyl-2-oxobutanoate + (6R)-5,10-methylene-5,6,7,8-tetrahydrofolate + H2O = 2-dehydropantoate + (6S)-5,6,7,8-tetrahydrofolate. It functions in the pathway cofactor biosynthesis; (R)-pantothenate biosynthesis; (R)-pantoate from 3-methyl-2-oxobutanoate: step 1/2. In terms of biological role, catalyzes the reversible reaction in which hydroxymethyl group from 5,10-methylenetetrahydrofolate is transferred onto alpha-ketoisovalerate to form ketopantoate. The polypeptide is 3-methyl-2-oxobutanoate hydroxymethyltransferase (Thermotoga neapolitana (strain ATCC 49049 / DSM 4359 / NBRC 107923 / NS-E)).